Consider the following 52-residue polypeptide: Protein PROPEP914 (52 aa).

Positions Asp-25–Tyr-52 are disordered. Residues Met-31–Ile-41 are compositionally biased toward polar residues. Basic and acidic residues predominate over residues Ser-43 to Tyr-52.

As to expression, expressed in roots. Barely detected in flowers.

In terms of biological role, produces a rapid alkalinization of the cellular media and the induction of defense-related genes, including chitinase 1b, chalcone synthase and CYP93A1. Not active in tobacco or Arabidopsis. The receptor for GmPep914 is probably different from the receptor for GmSubPep. The protein is Protein PROPEP914 (PROPEP914) of Glycine max (Soybean).